Here is a 241-residue protein sequence, read N- to C-terminus: Carboxy-S-adenosyl-L-methionine synthase (241 aa).

Residues Tyr38, 63–65 (GCS), 88–89 (DN), 116–117 (DI), Asn131, and Arg198 contribute to the S-adenosyl-L-methionine site.

This sequence belongs to the class I-like SAM-binding methyltransferase superfamily. Cx-SAM synthase family. Homodimer.

The enzyme catalyses prephenate + S-adenosyl-L-methionine = carboxy-S-adenosyl-L-methionine + 3-phenylpyruvate + H2O. In terms of biological role, catalyzes the conversion of S-adenosyl-L-methionine (SAM) to carboxy-S-adenosyl-L-methionine (Cx-SAM). The polypeptide is Carboxy-S-adenosyl-L-methionine synthase (Actinobacillus succinogenes (strain ATCC 55618 / DSM 22257 / CCUG 43843 / 130Z)).